We begin with the raw amino-acid sequence, 98 residues long: Small ribosomal subunit protein bS20 (98 aa).

It belongs to the bacterial ribosomal protein bS20 family.

Binds directly to 16S ribosomal RNA. The chain is Small ribosomal subunit protein bS20 from Parasynechococcus marenigrum (strain WH8102).